The chain runs to 277 residues: Shikimate dehydrogenase (NADP(+)) (277 aa).

Shikimate contacts are provided by residues 15-17 (SLS) and Thr62. Lys66 acts as the Proton acceptor in catalysis. Shikimate contacts are provided by Asn87 and Asp102. NADP(+)-binding positions include 127-131 (GAGGA), 151-156 (NRTVDK), and Ile219. Shikimate is bound at residue Tyr221. Gly242 lines the NADP(+) pocket.

It belongs to the shikimate dehydrogenase family. In terms of assembly, homodimer.

It catalyses the reaction shikimate + NADP(+) = 3-dehydroshikimate + NADPH + H(+). Its pathway is metabolic intermediate biosynthesis; chorismate biosynthesis; chorismate from D-erythrose 4-phosphate and phosphoenolpyruvate: step 4/7. Involved in the biosynthesis of the chorismate, which leads to the biosynthesis of aromatic amino acids. Catalyzes the reversible NADPH linked reduction of 3-dehydroshikimate (DHSA) to yield shikimate (SA). The chain is Shikimate dehydrogenase (NADP(+)) from Bacillus cereus (strain ZK / E33L).